The sequence spans 350 residues: Renin receptor (350 aa).

Residues 1–16 form the signal peptide; it reads MAVFVVLLALVAGVLG. The Extracellular segment spans residues 17-302; the sequence is NEFSILKSPG…YNLAYKYNFE (286 aa). A helical transmembrane segment spans residues 303–323; sequence YSVVFNMVLWIMIALALAVII. Residues 324-350 lie on the Cytoplasmic side of the membrane; that stretch reads TSYNIWNMDPGYDSIIYRMTNQKIRMD. Positions 346–350 match the Mediates retrograde transport to the ER motif; sequence KIRMD.

Interacts with renin. Accessory component of the multisubunit proton-transporting vacuolar (V)-ATPase protein pump. Interacts (via N-terminus) with ATP6AP1 (via N-terminus). Interacts with ATP6V0D1; ATP6V0D1 is a V-ATPase complex subunit and the interaction promotes V-ATPase complex assembly. Interacts with TMEM9; TMEM9 is a V-ATPase assembly regulator and the interaction induces the interaction with ATP6V0D1. Interacts with VMA21 (via N-terminus); VMA21 is a V-ATPase accessory component. In terms of processing, phosphorylated. Post-translationally, proteolytically cleaved by a furin-like convertase in the trans-Golgi network to generate N- and C-terminal fragments. Expressed in brain, heart, placenta, liver, kidney and pancreas. Barely detectable in lung and skeletal muscles. In the kidney cortex it is restricted to the mesangium of glomeruli. In the coronary and kidney artery it is expressed in the subendothelium, associated to smooth muscles where it colocalizes with REN. Expressed in vascular structures and by syncytiotrophoblast cells in the mature fetal placenta.

The protein resides in the endoplasmic reticulum membrane. It localises to the lysosome membrane. It is found in the cytoplasmic vesicle. The protein localises to the autophagosome membrane. Its subcellular location is the cell projection. The protein resides in the dendritic spine membrane. It localises to the axon. It is found in the endosome membrane. The protein localises to the clathrin-coated vesicle membrane. Its subcellular location is the secretory vesicle. The protein resides in the synaptic vesicle membrane. Functionally, multifunctional protein which functions as a renin, prorenin cellular receptor and is involved in the assembly of the lysosomal proton-transporting V-type ATPase (V-ATPase) and the acidification of the endo-lysosomal system. May mediate renin-dependent cellular responses by activating ERK1 and ERK2. By increasing the catalytic efficiency of renin in AGT/angiotensinogen conversion to angiotensin I, may also play a role in the renin-angiotensin system (RAS). Through its function in V-type ATPase (v-ATPase) assembly and acidification of the lysosome it regulates protein degradation and may control different signaling pathways important for proper brain development, synapse morphology and synaptic transmission. This is Renin receptor from Homo sapiens (Human).